Consider the following 273-residue polypeptide: Vacuolar iron transporter (273 aa).

The Cytoplasmic segment spans residues 1–47 (MVSKKTIEARKAYYNEDVVLSKEAHDFYHNLDKHGENHNLDKDNLKT). Residues 48 to 68 (IIFGSLDGIITIFAIVSGCVG) traverse the membrane as a helical segment. The Vacuolar segment spans residues 69–75 (AKITPTQ). Residues 76-96 (VIIIGIGNLFANAISMGFSEY) traverse the membrane as a helical segment. Residues 97–181 (TSSTAQRDFM…NEDKNECLKK (85 aa)) lie on the Cytoplasmic side of the membrane. Residues Glu113, Glu116, Glu124, Glu127, Met161, and Glu165 each contribute to the Fe cation site. The helical transmembrane segment at 182–202 (GIIMFLSFAVFGIIPLSAYVA) threads the bilayer. Over 203–212 (YTVFFGYTDY) the chain is Vacuolar. A helical membrane pass occupies residues 213-233 (TTSFLVVFISTLTTLFILGLF). Topologically, residues 234 to 246 (KSQFTNQKPITCA) are cytoplasmic. Residues 247–267 (LYMVLNGMIAGMVPFLLGVVL) form a helical membrane-spanning segment. The Vacuolar portion of the chain corresponds to 268–273 (KNNISE).

Belongs to the CCC1 family. Monomer.

Its subcellular location is the vacuole membrane. It localises to the endoplasmic reticulum membrane. The protein resides in the cytoplasmic vesicle membrane. The enzyme catalyses Fe(2+)(in) = Fe(2+)(out). Vacuolar iron transporter involved in the transfer of iron ions from the cytosol to the vacuole for intracellular iron storage. Involved in detoxification of excess iron. The transport mechanism is not well defined and the role of protons is not clear. The sequence is that of Vacuolar iron transporter from Plasmodium falciparum (isolate 3D7).